The following is a 326-amino-acid chain: Methionine import ATP-binding protein MetN (326 aa).

Residues 1-226 (MVFYTIGPQT…PQQPITRQFV (226 aa)) enclose the ABC transporter domain. 23 to 30 (GYSGAGKS) serves as a coordination point for ATP.

Belongs to the ABC transporter superfamily. Methionine importer (TC 3.A.1.24) family. In terms of assembly, the complex is composed of two ATP-binding proteins (MetN), two transmembrane proteins (MetI) and a solute-binding protein (MetQ).

The protein resides in the cell inner membrane. It catalyses the reaction L-methionine(out) + ATP + H2O = L-methionine(in) + ADP + phosphate + H(+). It carries out the reaction D-methionine(out) + ATP + H2O = D-methionine(in) + ADP + phosphate + H(+). In terms of biological role, part of the ABC transporter complex MetNIQ involved in methionine import. Responsible for energy coupling to the transport system. This is Methionine import ATP-binding protein MetN from Erwinia pyrifoliae (strain DSM 12162 / Ep1/96).